Here is a 280-residue protein sequence, read N- to C-terminus: Elongation factor Ts (280 aa).

The tract at residues 82–85 is involved in Mg(2+) ion dislocation from EF-Tu; the sequence is TDFV.

This sequence belongs to the EF-Ts family.

It localises to the cytoplasm. In terms of biological role, associates with the EF-Tu.GDP complex and induces the exchange of GDP to GTP. It remains bound to the aminoacyl-tRNA.EF-Tu.GTP complex up to the GTP hydrolysis stage on the ribosome. The chain is Elongation factor Ts from Baumannia cicadellinicola subsp. Homalodisca coagulata.